Reading from the N-terminus, the 212-residue chain is Protein FAM177A1 (212 aa).

Met-1 carries the N-acetylmethionine modification. A compositionally biased stretch (basic and acidic residues) spans 1-11 (MEGEPASREEG). Residues 1–33 (MEGEPASREEGEAVNASGAAAASAFRESAQQMS) are disordered. Positions 13-29 (AVNASGAAAASAFRESA) are enriched in low complexity. Position 69 is a phosphoserine (Ser-69). Thr-70 is subject to Phosphothreonine. Residues 135 to 172 (IDEYYRMKKEEEEEEEENRMSEEAERQYQQNKLQADSV) adopt a coiled-coil conformation. A disordered region spans residues 146–179 (EEEEEENRMSEEAERQYQQNKLQADSVVQSDQPE). The span at 161-179 (QYQQNKLQADSVVQSDQPE) shows a compositional bias: polar residues.

Belongs to the FAM177 family.

The polypeptide is Protein FAM177A1 (FAM177A1) (Bos taurus (Bovine)).